The following is a 100-amino-acid chain: RNA-binding protein YlxQ (100 aa).

This sequence belongs to the eukaryotic ribosomal protein eL8 family.

In terms of biological role, RNA-binding protein that recognizes the K-turn motif present in ribosomal RNA, but also in box C/D and box C'/D' sRNAs. The polypeptide is RNA-binding protein YlxQ (Bacillus subtilis (strain 168)).